Here is a 370-residue protein sequence, read N- to C-terminus: DNA replication and repair protein RecF (370 aa).

An ATP-binding site is contributed by 30–37; that stretch reads GENAQGKT.

Belongs to the RecF family.

It is found in the cytoplasm. Functionally, the RecF protein is involved in DNA metabolism; it is required for DNA replication and normal SOS inducibility. RecF binds preferentially to single-stranded, linear DNA. It also seems to bind ATP. The protein is DNA replication and repair protein RecF of Bacillus pumilus (strain SAFR-032).